The sequence spans 471 residues: MAREMTILGSAVLTLLLAGYLAQQYLPLPTPKVIGIDLGTTYCSVGVFFPGTGKVKVIPDENGHISIPSMVSFTDNDVYVGYESVELADSNPQNTIYDAKRFIGKIFTAEELEAEIGRYPFKVLNKNGMVEFSVTSNETITVSPEYVGSRLLLKLKEMAEAYLGMPVANAVISVPAEFDLKQRNSTIEAANLAGLKILRVINEPTAAAMAYGLHKADVFHVLVIDLGGGTLDVSLLNKQGGMFLTRAMSGNNKLGGQDFNQRLLQYLYKQIYQTYGFVPSRKEEIHRLRQAVEMVKLNLTLHQSAQLSVLLTVEEQDRKEPHSSDTELPKDKLSSADDHRVNSGFGRGLSDKKSGESQVLFETEISRKLFDTLNEDLFQKILVPIQQVLKEGHLEKTEIDEVVLVGGSTRIPRIRQVIQEFFGKDPNTSVDPDLAVVTGVAIQAGIDGGSWPLQVSALEIPNKHLQKTNFN.

An N-terminal signal peptide occupies residues 1 to 22 (MAREMTILGSAVLTLLLAGYLA). A compositionally biased stretch (basic and acidic residues) spans 315–341 (EQDRKEPHSSDTELPKDKLSSADDHRV). Positions 315–352 (EQDRKEPHSSDTELPKDKLSSADDHRVNSGFGRGLSDK) are disordered.

It belongs to the heat shock protein 70 family. Binds UBQLN2. As to expression, constitutively expressed in all tissues.

The protein resides in the microsome. The protein localises to the endoplasmic reticulum. In terms of biological role, has peptide-independent ATPase activity. The protein is Heat shock 70 kDa protein 13 (HSPA13) of Homo sapiens (Human).